A 422-amino-acid polypeptide reads, in one-letter code: UDP-N-acetylglucosamine 1-carboxyvinyltransferase (422 aa).

22-23 serves as a coordination point for phosphoenolpyruvate; the sequence is KN. Position 93 (R93) interacts with UDP-N-acetyl-alpha-D-glucosamine. C117 serves as the catalytic Proton donor. Residue C117 is modified to 2-(S-cysteinyl)pyruvic acid O-phosphothioketal. UDP-N-acetyl-alpha-D-glucosamine contacts are provided by residues 122–126, D305, and I327; that span reads RPVDQ.

It belongs to the EPSP synthase family. MurA subfamily.

It is found in the cytoplasm. The enzyme catalyses phosphoenolpyruvate + UDP-N-acetyl-alpha-D-glucosamine = UDP-N-acetyl-3-O-(1-carboxyvinyl)-alpha-D-glucosamine + phosphate. The protein operates within cell wall biogenesis; peptidoglycan biosynthesis. In terms of biological role, cell wall formation. Adds enolpyruvyl to UDP-N-acetylglucosamine. In Bordetella petrii (strain ATCC BAA-461 / DSM 12804 / CCUG 43448), this protein is UDP-N-acetylglucosamine 1-carboxyvinyltransferase.